A 30-amino-acid chain; its full sequence is Kalata-B14 (30 aa).

Positions 1–30 (GLPVCGESCFGGTCNTPGCACDPWPVCTRD) form a cross-link, cyclopeptide (Gly-Asp). Intrachain disulfides connect cysteine 5/cysteine 19, cysteine 9/cysteine 21, and cysteine 14/cysteine 27.

This is a cyclic peptide.

In terms of biological role, probably participates in a plant defense mechanism. This is Kalata-B14 from Oldenlandia affinis.